Here is a 183-residue protein sequence, read N- to C-terminus: Bifunctional protein PyrR (183 aa).

Residues 42–43 (TR), Arg87, 104–112 (DDVLYTGRT), Arg137, and Val161 each bind substrate. The short motif at 100 to 112 (VILVDDVLYTGRT) is the PRPP-binding element.

It belongs to the purine/pyrimidine phosphoribosyltransferase family. PyrR subfamily.

The enzyme catalyses UMP + diphosphate = 5-phospho-alpha-D-ribose 1-diphosphate + uracil. Functionally, regulates the transcription of the pyrimidine nucleotide (pyr) operon in response to exogenous pyrimidines. Its function is as follows. Also displays a weak uracil phosphoribosyltransferase activity which is not physiologically significant. The chain is Bifunctional protein PyrR from Deinococcus radiodurans (strain ATCC 13939 / DSM 20539 / JCM 16871 / CCUG 27074 / LMG 4051 / NBRC 15346 / NCIMB 9279 / VKM B-1422 / R1).